The primary structure comprises 194 residues: Probable GTP-binding protein EngB (194 aa).

Residues 22-194 (GKPEIALVGR…SVWEWITAHM (173 aa)) form the EngB-type G domain. GTP-binding positions include 30–37 (GRSNVGKS), 57–61 (GKTQT), 75–78 (DVPG), 142–145 (TKSD), and 175–177 (FSS). Residues Ser37 and Thr59 each contribute to the Mg(2+) site.

It belongs to the TRAFAC class TrmE-Era-EngA-EngB-Septin-like GTPase superfamily. EngB GTPase family. Mg(2+) is required as a cofactor.

Functionally, necessary for normal cell division and for the maintenance of normal septation. This is Probable GTP-binding protein EngB from Leuconostoc citreum (strain KM20).